The following is a 526-amino-acid chain: Zinc finger protein 69 homolog (526 aa).

Positions 1-39 constitute an SCAN box domain; the sequence is MPQQLLITLPTEASTWVKLQHPKKAVEGAPLWEDVTKMF. The KRAB domain occupies 76–147; sequence LTFKDISIDF…EKEGPGDPSS (72 aa). 9 consecutive C2H2-type zinc fingers follow at residues 271 to 293, 299 to 321, 327 to 349, 355 to 377, 383 to 405, 411 to 433, 439 to 461, 467 to 489, and 495 to 517; these read YECN…MRIH, FRCK…QRIH, FECE…HRTH, YVCD…LRTH, FTCN…IRIH, YACT…QRIH, YKCK…KTVH, YECN…QRHH, and YECN…HEIH.

Belongs to the krueppel C2H2-type zinc-finger protein family. Expressed in visceral and subcutaneous adipose tissue.

Its subcellular location is the nucleus. Putative transcription factor that appears to regulate lipid metabolism. In Homo sapiens (Human), this protein is Zinc finger protein 69 homolog (ZFP69).